Reading from the N-terminus, the 120-residue chain is NAD(P)H-quinone oxidoreductase subunit 3, chloroplastic (120 aa).

A run of 3 helical transmembrane segments spans residues 9 to 29, 64 to 84, and 88 to 108; these read IFWAFLMISSVIPILAFLISG, MFALVFVVFDVETVFLYPWAM, and VLGVSAFIEALIFVLIPIVGS.

Belongs to the complex I subunit 3 family. In terms of assembly, NDH is composed of at least 16 different subunits, 5 of which are encoded in the nucleus.

It is found in the plastid. Its subcellular location is the chloroplast thylakoid membrane. It catalyses the reaction a plastoquinone + NADH + (n+1) H(+)(in) = a plastoquinol + NAD(+) + n H(+)(out). It carries out the reaction a plastoquinone + NADPH + (n+1) H(+)(in) = a plastoquinol + NADP(+) + n H(+)(out). In terms of biological role, NDH shuttles electrons from NAD(P)H:plastoquinone, via FMN and iron-sulfur (Fe-S) centers, to quinones in the photosynthetic chain and possibly in a chloroplast respiratory chain. The immediate electron acceptor for the enzyme in this species is believed to be plastoquinone. Couples the redox reaction to proton translocation, and thus conserves the redox energy in a proton gradient. The protein is NAD(P)H-quinone oxidoreductase subunit 3, chloroplastic of Illicium oligandrum (Star anise).